The following is a 281-amino-acid chain: Ribosomal RNA small subunit methyltransferase A (281 aa).

N24, L26, G51, E72, D96, and N123 together coordinate S-adenosyl-L-methionine.

It belongs to the class I-like SAM-binding methyltransferase superfamily. rRNA adenine N(6)-methyltransferase family. RsmA subfamily.

The protein resides in the cytoplasm. The enzyme catalyses adenosine(1518)/adenosine(1519) in 16S rRNA + 4 S-adenosyl-L-methionine = N(6)-dimethyladenosine(1518)/N(6)-dimethyladenosine(1519) in 16S rRNA + 4 S-adenosyl-L-homocysteine + 4 H(+). Specifically dimethylates two adjacent adenosines (A1518 and A1519) in the loop of a conserved hairpin near the 3'-end of 16S rRNA in the 30S particle. May play a critical role in biogenesis of 30S subunits. This chain is Ribosomal RNA small subunit methyltransferase A, found in Ureaplasma urealyticum serovar 10 (strain ATCC 33699 / Western).